The sequence spans 607 residues: Glutamine--fructose-6-phosphate aminotransferase [isomerizing] (607 aa).

Cys2 acts as the Nucleophile; for GATase activity in catalysis. The 216-residue stretch at 2–217 (CGIIGIIGND…DGDWAVLTRN (216 aa)) folds into the Glutamine amidotransferase type-2 domain. SIS domains lie at 283-422 (IGID…ARGA) and 455-597 (VCHD…VDQP). Lys602 acts as the For Fru-6P isomerization activity in catalysis.

As to quaternary structure, homodimer.

Its subcellular location is the cytoplasm. The catalysed reaction is D-fructose 6-phosphate + L-glutamine = D-glucosamine 6-phosphate + L-glutamate. Catalyzes the first step in hexosamine metabolism, converting fructose-6P into glucosamine-6P using glutamine as a nitrogen source. The polypeptide is Glutamine--fructose-6-phosphate aminotransferase [isomerizing] (Brucella suis biovar 1 (strain 1330)).